A 513-amino-acid polypeptide reads, in one-letter code: Fumarate reductase (513 aa).

41-55 (AIVIGGGLAGLSATN) contributes to the FAD binding site. Phosphoserine is present on serine 100. Residues histidine 288 and arginine 311 contribute to the active site.

Belongs to the FAD-dependent oxidoreductase 2 family. FRD/SDH subfamily. FAD serves as cofactor.

It localises to the cytoplasm. It is found in the mitochondrion. The protein resides in the nucleus. The enzyme catalyses succinate + NAD(+) = fumarate + NADH + H(+). In terms of biological role, irreversibly catalyzes the reduction of fumarate to succinate. This Schizosaccharomyces pombe (strain 972 / ATCC 24843) (Fission yeast) protein is Fumarate reductase (osm1).